The sequence spans 144 residues: Large ribosomal subunit protein uL15 (144 aa).

The interval 1–51 (MRLNTIKPGAGSKSAGKRVGRGIGSGLGKTCGRGHKGQKSRAGGFHKVGFE) is disordered. Residues 21 to 31 (RGIGSGLGKTC) show a composition bias toward gly residues.

It belongs to the universal ribosomal protein uL15 family. As to quaternary structure, part of the 50S ribosomal subunit.

In terms of biological role, binds to the 23S rRNA. The chain is Large ribosomal subunit protein uL15 from Azoarcus sp. (strain BH72).